The sequence spans 453 residues: Aryl hydrocarbon receptor nuclear translocator homolog (453 aa).

The 54-residue stretch at 44-97 (FARENHSEIERRRRNKMTHYINELAEMVPQCASLGRKPDKLTILRMAVSHMKGI) folds into the bHLH domain. PAS domains are found at residues 115-193 (DQEL…LDLK) and 277-347 (ASMP…LSDQ). The 45-residue stretch at 348–392 (PMRINIRVRTSTDYIPCTVSAYKFMNPYSEQFEYVVATHQIAPQE) folds into the PAC domain. Residues 410 to 453 (EFGELGGAPSAVDYGQSSSGGWRPEAQGAPQAQWQWDPMNGYNQ) are disordered.

As to quaternary structure, interacts with hif-1. Heterodimer; efficient DNA binding requires dimerization with another bHLH protein. Forms a heterodimer with ahr-1; binds DNA as heterodimer. Forms a heterodimer with PAS domain-containing protein cky-1; binds DNA as heterodimer. Expressed in many cell types throughout development, including hypodermal cells, intestinal cells, pharyngeal cells, and neurons. Expressed in every cell during embryo.

It is found in the nucleus. Its function is as follows. Transcription factor. Efficient DNA binding requires dimerization with another bHLH protein, such as cky-1 or ahr-1. Regulates transcription of target genes, probably acting in complex with cky-1. Has a role in cellular differentiation. Required for pharyngeal development. In collaboration with ahr-1 it is involved in RMEL/R and SDQR neuron cell migration. Acts in the cellular response to hypoxia. Involved in aggregation behavior by regulating soluble guanylate cyclase gene expression in the URX neurons. The sequence is that of Aryl hydrocarbon receptor nuclear translocator homolog from Caenorhabditis elegans.